The sequence spans 511 residues: Pickpocket protein 19 (511 aa).

2 helical membrane passes run L59–M79 and G471–L491.

This sequence belongs to the amiloride-sensitive sodium channel (TC 1.A.6) family. Expressed in the tracheal system. Expressed in the taste-sensing terminal organ of the larval head. In adults, expressed in hairs on the tibia, femur and wing margin, but not in hairs on the tarsi of the leg.

Its subcellular location is the membrane. Functionally, part of a complex that plays a role in tracheal liquid clearance. In both larvae and adults, contributes to the behavioral response to salt. Probable role in sodium transport. The chain is Pickpocket protein 19 (ppk19) from Drosophila melanogaster (Fruit fly).